Consider the following 320-residue polypeptide: Malate dehydrogenase (320 aa).

Residues 10–15 (GAGNIG) and D34 each bind NAD(+). Substrate contacts are provided by R83 and R89. Residues N96 and 119-121 (ITN) contribute to the NAD(+) site. The substrate site is built by N121 and R152. The active-site Proton acceptor is H176.

The protein belongs to the LDH/MDH superfamily. MDH type 3 family.

It carries out the reaction (S)-malate + NAD(+) = oxaloacetate + NADH + H(+). Catalyzes the reversible oxidation of malate to oxaloacetate. This is Malate dehydrogenase from Sphingopyxis alaskensis (strain DSM 13593 / LMG 18877 / RB2256) (Sphingomonas alaskensis).